The primary structure comprises 495 residues: Glycerol kinase (495 aa).

Position 11 (threonine 11) interacts with ADP. Positions 11, 12, and 13 each coordinate ATP. Threonine 11 is a binding site for sn-glycerol 3-phosphate. Residue arginine 15 participates in ADP binding. Sn-glycerol 3-phosphate is bound by residues arginine 81, glutamate 82, tyrosine 133, and aspartate 242. Residues arginine 81, glutamate 82, tyrosine 133, aspartate 242, and glutamine 243 each contribute to the glycerol site. The ADP site is built by threonine 264 and glycine 307. The ATP site is built by threonine 264, glycine 307, glutamine 311, and glycine 408. 2 residues coordinate ADP: glycine 408 and asparagine 412.

It belongs to the FGGY kinase family.

The enzyme catalyses glycerol + ATP = sn-glycerol 3-phosphate + ADP + H(+). It participates in polyol metabolism; glycerol degradation via glycerol kinase pathway; sn-glycerol 3-phosphate from glycerol: step 1/1. Its activity is regulated as follows. Inhibited by fructose 1,6-bisphosphate (FBP). Its function is as follows. Key enzyme in the regulation of glycerol uptake and metabolism. Catalyzes the phosphorylation of glycerol to yield sn-glycerol 3-phosphate. This chain is Glycerol kinase, found in Citrifermentans bemidjiense (strain ATCC BAA-1014 / DSM 16622 / JCM 12645 / Bem) (Geobacter bemidjiensis).